The following is a 543-amino-acid chain: MPPPLQAQRLLLSHRRLPSPHLRCFTAVSSLPSAPAKTVAAAAAHAPSSILSIRESLLSGERTAAEITAEYLSRLRRTEPSVRSFIHVADAAAEREAEELDRRIATEGLDAVGPLAGVLVGVKDNLCTANMPSTGGSRILDGYQPAYDATAVRRLREAGAIVVGKTNLDEFGMGSTTEGSGFQVTTNPWDDSRVPGGSSGGSASAVSARQCVVSLGSDTGGSVRQPASFCGVVGLKPTYGRVSRFGLMAYASSLDVVGCFGSSVVDTATILSVIAGHDKMDSTSSSHDVSDYKSELVPLDLLESKPLNGMRIGIIQETLGEGVETGVISSIKDAASHLEQLGSVVEEVSLPSFSLGLPAYYILASSEASSNLSRYDGIRYGRQVSGDDLNELYGGSRANGLGHEVKMRILMGTYALSAGYYDAYYKRAQQVRTLVKKSFKEALERYDILVSPAAPSAAYKIGEKINDPLAMYAGDTMTVNVNLAGLPALVVPCGFVEGGSAGLPVGLQMIGSPFSEGNLLRIGHIFEQTLQNYSFVPPLLAES.

Catalysis depends on charge relay system residues K123 and S198. Catalysis depends on S222, which acts as the Acyl-ester intermediate.

The protein belongs to the amidase family. GatA subfamily. As to quaternary structure, subunit of the heterotrimeric GatCAB amidotransferase (AdT) complex, composed of A, B and C subunits.

The protein resides in the mitochondrion. The protein localises to the plastid. It is found in the chloroplast stroma. The catalysed reaction is L-glutamyl-tRNA(Gln) + L-glutamine + ATP + H2O = L-glutaminyl-tRNA(Gln) + L-glutamate + ADP + phosphate + H(+). Functionally, allows the formation of correctly charged Gln-tRNA(Gln) through the transamidation of misacylated Glu-tRNA(Gln) in chloroplasts and mitochondria. The reaction takes place in the presence of glutamine and ATP through an activated gamma-phospho-Glu-tRNA(Gln). The protein is Glutamyl-tRNA(Gln) amidotransferase subunit A, chloroplastic/mitochondrial of Oryza sativa subsp. japonica (Rice).